The sequence spans 248 residues: Small ribosomal subunit protein uS2 (248 aa).

It belongs to the universal ribosomal protein uS2 family.

This chain is Small ribosomal subunit protein uS2, found in Thiobacillus denitrificans (strain ATCC 25259 / T1).